The following is a 1058-amino-acid chain: Carbamoyl phosphate synthase large chain (1058 aa).

The interval 1-399 (MPIDKDIKKV…AIQKAIRSLD (399 aa)) is carboxyphosphate synthetic domain. 12 residues coordinate ATP: Arg-127, Arg-167, Gly-173, Gly-174, Glu-206, Val-208, Glu-213, Gly-239, Ile-240, His-241, Gln-282, and Glu-296. The region spanning 131–325 (GHFMDKLNEP…IAKISSKIAL (195 aa)) is the ATP-grasp 1 domain. Mg(2+)-binding residues include Gln-282, Glu-296, and Asn-298. Mn(2+)-binding residues include Gln-282, Glu-296, and Asn-298. Residues 400–538 (MGHDGFEYVE…YSTYDSGNEL (139 aa)) form an oligomerization domain region. The carbamoyl phosphate synthetic domain stretch occupies residues 539–924 (KSSNKKKIVI…YKSQLAAGMD (386 aa)). An ATP-grasp 2 domain is found at 663-856 (AKLLNKLHIH…LAKVATWIMT (194 aa)). Residues Arg-699, Lys-738, Leu-740, Glu-745, Gly-770, Val-771, His-772, Ser-773, Gln-813, and Glu-827 each coordinate ATP. Gln-813, Glu-827, and Asn-829 together coordinate Mg(2+). The Mn(2+) site is built by Gln-813, Glu-827, and Asn-829. One can recognise an MGS-like domain in the interval 923 to 1058 (MDLPKEGKIF…KSLNEHIDGE (136 aa)). Residues 925-1058 (LPKEGKIFIS…KSLNEHIDGE (134 aa)) are allosteric domain.

It belongs to the CarB family. Composed of two chains; the small (or glutamine) chain promotes the hydrolysis of glutamine to ammonia, which is used by the large (or ammonia) chain to synthesize carbamoyl phosphate. Tetramer of heterodimers (alpha,beta)4. The cofactor is Mg(2+). It depends on Mn(2+) as a cofactor.

It carries out the reaction hydrogencarbonate + L-glutamine + 2 ATP + H2O = carbamoyl phosphate + L-glutamate + 2 ADP + phosphate + 2 H(+). The catalysed reaction is hydrogencarbonate + NH4(+) + 2 ATP = carbamoyl phosphate + 2 ADP + phosphate + 2 H(+). It participates in amino-acid biosynthesis; L-arginine biosynthesis; carbamoyl phosphate from bicarbonate: step 1/1. Its pathway is pyrimidine metabolism; UMP biosynthesis via de novo pathway; (S)-dihydroorotate from bicarbonate: step 1/3. Its function is as follows. Large subunit of the glutamine-dependent carbamoyl phosphate synthetase (CPSase). CPSase catalyzes the formation of carbamoyl phosphate from the ammonia moiety of glutamine, carbonate, and phosphate donated by ATP, constituting the first step of 2 biosynthetic pathways, one leading to arginine and/or urea and the other to pyrimidine nucleotides. The large subunit (synthetase) binds the substrates ammonia (free or transferred from glutamine from the small subunit), hydrogencarbonate and ATP and carries out an ATP-coupled ligase reaction, activating hydrogencarbonate by forming carboxy phosphate which reacts with ammonia to form carbamoyl phosphate. This is Carbamoyl phosphate synthase large chain from Methanobrevibacter smithii (strain ATCC 35061 / DSM 861 / OCM 144 / PS).